Here is a 333-residue protein sequence, read N- to C-terminus: D-alanine--D-alanine ligase (333 aa).

One can recognise an ATP-grasp domain in the interval 124 to 329; sequence KMWFSALGIP…FTEYLYSNIK (206 aa). 154–209 lines the ATP pocket; sequence ALETWGSVFIKAASQGSSVGCYRVDSIDELASSLKEAFSYSPYVVVEKTIHARELE. Mg(2+) contacts are provided by D283, E296, and N298.

This sequence belongs to the D-alanine--D-alanine ligase family. It depends on Mg(2+) as a cofactor. The cofactor is Mn(2+).

The protein localises to the cytoplasm. The enzyme catalyses 2 D-alanine + ATP = D-alanyl-D-alanine + ADP + phosphate + H(+). The protein operates within cell wall biogenesis; peptidoglycan biosynthesis. In terms of biological role, cell wall formation. This chain is D-alanine--D-alanine ligase, found in Shewanella sediminis (strain HAW-EB3).